The sequence spans 226 residues: ATP synthase F(0) complex subunit a (226 aa).

Transmembrane regions (helical) follow at residues 12 to 32, 68 to 88, 97 to 117, 138 to 158, 164 to 184, and 189 to 209; these read PTVL…LLVP, WSLM…LGLF, QLSM…AMGL, IPML…ALAV, ITAG…MLTI, and TLIT…VALI.

This sequence belongs to the ATPase A chain family. As to quaternary structure, component of the ATP synthase complex composed at least of ATP5F1A/subunit alpha, ATP5F1B/subunit beta, ATP5MC1/subunit c (homooctomer), MT-ATP6/subunit a, MT-ATP8/subunit 8, ATP5ME/subunit e, ATP5MF/subunit f, ATP5MG/subunit g, ATP5MK/subunit k, ATP5MJ/subunit j, ATP5F1C/subunit gamma, ATP5F1D/subunit delta, ATP5F1E/subunit epsilon, ATP5PF/subunit F6, ATP5PB/subunit b, ATP5PD/subunit d, ATP5PO/subunit OSCP. ATP synthase complex consists of a soluble F(1) head domain (subunits alpha(3) and beta(3)) - the catalytic core - and a membrane F(0) domain - the membrane proton channel (subunits c, a, 8, e, f, g, k and j). These two domains are linked by a central stalk (subunits gamma, delta, and epsilon) rotating inside the F1 region and a stationary peripheral stalk (subunits F6, b, d, and OSCP). Interacts with DNAJC30; interaction is direct.

It localises to the mitochondrion inner membrane. The enzyme catalyses H(+)(in) = H(+)(out). Its function is as follows. Subunit a, of the mitochondrial membrane ATP synthase complex (F(1)F(0) ATP synthase or Complex V) that produces ATP from ADP in the presence of a proton gradient across the membrane which is generated by electron transport complexes of the respiratory chain. ATP synthase complex consist of a soluble F(1) head domain - the catalytic core - and a membrane F(1) domain - the membrane proton channel. These two domains are linked by a central stalk rotating inside the F(1) region and a stationary peripheral stalk. During catalysis, ATP synthesis in the catalytic domain of F(1) is coupled via a rotary mechanism of the central stalk subunits to proton translocation. With the subunit c (ATP5MC1), forms the proton-conducting channel in the F(0) domain, that contains two crucial half-channels (inlet and outlet) that facilitate proton movement from the mitochondrial intermembrane space (IMS) into the matrix. Protons are taken up via the inlet half-channel and released through the outlet half-channel, following a Grotthuss mechanism. In Pongo pygmaeus (Bornean orangutan), this protein is ATP synthase F(0) complex subunit a.